An 816-amino-acid polypeptide reads, in one-letter code: Homeobox-leucine zipper protein ROC9 (816 aa).

Positions 26-104 (VFGRKNGPAA…RRKNYHRHTA (79 aa)) are disordered. Residues 92-101 (KKRRRKNYHR) are compositionally biased toward basic residues. A DNA-binding region (homeobox) is located at residues 95 to 154 (RRKNYHRHTAEQIRIMEALFKESPHPDERQRQQVSKQLGLSARQVKFWFQNRRTQIKAVQ). Residues 149–182 (QIKAVQERHENSLLKSELEKLQDEHRAMRELAKK) are a coiled coil. Residues 265-296 (KSAADGIASPPCSASAGAMQTNSRSPPLHDHD) form a disordered region. In terms of domain architecture, START spans 302 to 541 (HDDDKPRILE…LQLQCERMVF (240 aa)).

This sequence belongs to the HD-ZIP homeobox family. Class IV subfamily.

It localises to the nucleus. Functionally, probable transcription factor. This chain is Homeobox-leucine zipper protein ROC9 (ROC9), found in Oryza sativa subsp. japonica (Rice).